The sequence spans 357 residues: UDP-N-acetylglucosamine--N-acetylmuramyl-(pentapeptide) pyrophosphoryl-undecaprenol N-acetylglucosamine transferase (357 aa).

UDP-N-acetyl-alpha-D-glucosamine is bound by residues 10–12 (TGG), asparagine 124, serine 189, isoleucine 244, and glutamine 289.

The protein belongs to the glycosyltransferase 28 family. MurG subfamily.

It is found in the cell membrane. The enzyme catalyses Mur2Ac(oyl-L-Ala-gamma-D-Glu-L-Lys-D-Ala-D-Ala)-di-trans,octa-cis-undecaprenyl diphosphate + UDP-N-acetyl-alpha-D-glucosamine = beta-D-GlcNAc-(1-&gt;4)-Mur2Ac(oyl-L-Ala-gamma-D-Glu-L-Lys-D-Ala-D-Ala)-di-trans,octa-cis-undecaprenyl diphosphate + UDP + H(+). It functions in the pathway cell wall biogenesis; peptidoglycan biosynthesis. Functionally, cell wall formation. Catalyzes the transfer of a GlcNAc subunit on undecaprenyl-pyrophosphoryl-MurNAc-pentapeptide (lipid intermediate I) to form undecaprenyl-pyrophosphoryl-MurNAc-(pentapeptide)GlcNAc (lipid intermediate II). The sequence is that of UDP-N-acetylglucosamine--N-acetylmuramyl-(pentapeptide) pyrophosphoryl-undecaprenol N-acetylglucosamine transferase from Lactococcus lactis subsp. cremoris (strain MG1363).